The primary structure comprises 156 residues: 6,7-dimethyl-8-ribityllumazine synthase (156 aa).

5-amino-6-(D-ribitylamino)uracil is bound by residues Phe22, Ala57–Glu59, and Ser81–Ile83. Gly86–Thr87 is a binding site for (2S)-2-hydroxy-3-oxobutyl phosphate. His89 (proton donor) is an active-site residue. Phe114 serves as a coordination point for 5-amino-6-(D-ribitylamino)uracil. Residue Arg128 participates in (2S)-2-hydroxy-3-oxobutyl phosphate binding.

It belongs to the DMRL synthase family. Forms an icosahedral capsid composed of 60 subunits, arranged as a dodecamer of pentamers.

It carries out the reaction (2S)-2-hydroxy-3-oxobutyl phosphate + 5-amino-6-(D-ribitylamino)uracil = 6,7-dimethyl-8-(1-D-ribityl)lumazine + phosphate + 2 H2O + H(+). It participates in cofactor biosynthesis; riboflavin biosynthesis; riboflavin from 2-hydroxy-3-oxobutyl phosphate and 5-amino-6-(D-ribitylamino)uracil: step 1/2. In terms of biological role, catalyzes the formation of 6,7-dimethyl-8-ribityllumazine by condensation of 5-amino-6-(D-ribitylamino)uracil with 3,4-dihydroxy-2-butanone 4-phosphate. This is the penultimate step in the biosynthesis of riboflavin. This is 6,7-dimethyl-8-ribityllumazine synthase from Photobacterium leiognathi.